Reading from the N-terminus, the 669-residue chain is RNA-binding protein 14 (669 aa).

RRM domains follow at residues 1–73 (MKIF…MSRP) and 79–149 (WKIF…LSTK). Residues lysine 126, lysine 135, lysine 138, lysine 149, and lysine 153 each participate in a glycyl lysine isopeptide (Lys-Gly) (interchain with G-Cter in SUMO2) cross-link. Disordered stretches follow at residues 147–175 (STKGQKKGPGLAVQSGDKTKKPGAGDTAF) and 193–232 (NSTGGFDGQARQPTPPFFGRDRSPLRRSPPRASYVAPLTA). A Phosphoserine modification is found at serine 161. At lysine 164 the chain carries N6-acetyllysine; alternate. Lysine 164 is covalently cross-linked (Glycyl lysine isopeptide (Lys-Gly) (interchain with G-Cter in SUMO2); alternate). The residue at position 206 (threonine 206) is a Phosphothreonine. Serine 220, serine 242, serine 244, serine 256, serine 272, and serine 280 each carry phosphoserine. Residues 284–303 (PYRGQLASPSSQSAAASSLG) are disordered. Residues 287 to 303 (GQLASPSSQSAAASSLG) show a composition bias toward low complexity. The interval 307-354 (GAQPSASALSSYGGQAAAASSLNSYGAQGSSLASYGNQPSSYGAQAAS) is TRBP-interacting domain; interaction with STIL. Phosphoserine is present on residues serine 520, serine 523, serine 527, and serine 562. The interval 566 to 592 (VANANSTPPPYERTRLSPPRASYDDPY) is disordered. Residue threonine 572 is modified to Phosphothreonine. Position 582 is a phosphoserine (serine 582). Residue lysine 600 forms a Glycyl lysine isopeptide (Lys-Gly) (interchain with G-Cter in SUMO2) linkage. 6 positions are modified to phosphoserine: serine 618, serine 620, serine 623, serine 627, serine 643, and serine 649.

In terms of assembly, interacts with NCOA6, CITED1 and XRCC5/KU86. Interacts with SS18. Interacts with STIL and interferes with its interaction with CPAP. Interacts with gamma-tubulin. Part of the HDP-RNP complex composed of at least HEXIM1, PRKDC, XRCC5, XRCC6, paraspeckle proteins (SFPQ, NONO, PSPC1, RBM14, and MATR3) and NEAT1 RNA.

The protein resides in the nucleus. Its subcellular location is the nucleolus. It is found in the cytoplasm. In terms of biological role, may function as a nuclear receptor coactivator, enhancing transcription through other coactivators such as NCOA6 and CITED1. Regulates centriole biogenesis by suppressing the formation of aberrant centriolar protein complexes in the cytoplasm and thus preserving mitotic spindle integrity. Prevents the formation of the STIL-CPAP complex (which can induce the formation of aberrant centriolar protein complexes) by interfering with the interaction of STIL with CPAP. Plays a role in the regulation of DNA virus-mediated innate immune response by assembling into the HDP-RNP complex, a complex that serves as a platform for IRF3 phosphorylation and subsequent innate immune response activation through the cGAS-STING pathway. This is RNA-binding protein 14 (RBM14) from Pongo abelii (Sumatran orangutan).